A 163-amino-acid polypeptide reads, in one-letter code: 2-amino-4-hydroxy-6-hydroxymethyldihydropteridine pyrophosphokinase (163 aa).

Belongs to the HPPK family.

It catalyses the reaction 6-hydroxymethyl-7,8-dihydropterin + ATP = (7,8-dihydropterin-6-yl)methyl diphosphate + AMP + H(+). The protein operates within cofactor biosynthesis; tetrahydrofolate biosynthesis; 2-amino-4-hydroxy-6-hydroxymethyl-7,8-dihydropteridine diphosphate from 7,8-dihydroneopterin triphosphate: step 4/4. Its function is as follows. Catalyzes the transfer of pyrophosphate from adenosine triphosphate (ATP) to 6-hydroxymethyl-7,8-dihydropterin, an enzymatic step in folate biosynthesis pathway. This Helicobacter pylori (strain ATCC 700392 / 26695) (Campylobacter pylori) protein is 2-amino-4-hydroxy-6-hydroxymethyldihydropteridine pyrophosphokinase (folK).